We begin with the raw amino-acid sequence, 302 residues long: UDP-N-acetylenolpyruvoylglucosamine reductase (302 aa).

The FAD-binding PCMH-type domain maps to 31 to 213; sequence KIGGPADFLI…KKIREFREKR (183 aa). Arginine 176 is a catalytic residue. Serine 226 (proton donor) is an active-site residue. Glutamate 296 is a catalytic residue.

This sequence belongs to the MurB family. FAD is required as a cofactor.

Its subcellular location is the cytoplasm. It catalyses the reaction UDP-N-acetyl-alpha-D-muramate + NADP(+) = UDP-N-acetyl-3-O-(1-carboxyvinyl)-alpha-D-glucosamine + NADPH + H(+). The protein operates within cell wall biogenesis; peptidoglycan biosynthesis. In terms of biological role, cell wall formation. This is UDP-N-acetylenolpyruvoylglucosamine reductase from Carboxydothermus hydrogenoformans (strain ATCC BAA-161 / DSM 6008 / Z-2901).